The sequence spans 33 residues: Brevinin-2DYc (33 aa).

Cys27 and Cys33 form a disulfide bridge.

As to expression, expressed by the skin glands.

Its subcellular location is the secreted. Its function is as follows. Antimicrobial peptide. A mixture of Brevinin-2DYc/2DYd is active against the Gram-positive bacterium S.aureus (MIC=15 uM) and the Gram-negative bacterium E.coli (MIC=15 uM). In Rana dybowskii (Dybovsky's frog), this protein is Brevinin-2DYc.